The following is a 743-amino-acid chain: 1,4-alpha-glucan branching enzyme GlgB (743 aa).

Asp-416 (nucleophile) is an active-site residue. Glu-469 functions as the Proton donor in the catalytic mechanism.

It belongs to the glycosyl hydrolase 13 family. GlgB subfamily. In terms of assembly, monomer.

The enzyme catalyses Transfers a segment of a (1-&gt;4)-alpha-D-glucan chain to a primary hydroxy group in a similar glucan chain.. Its pathway is glycan biosynthesis; glycogen biosynthesis. Catalyzes the formation of the alpha-1,6-glucosidic linkages in glycogen by scission of a 1,4-alpha-linked oligosaccharide from growing alpha-1,4-glucan chains and the subsequent attachment of the oligosaccharide to the alpha-1,6 position. This chain is 1,4-alpha-glucan branching enzyme GlgB, found in Shewanella baltica (strain OS155 / ATCC BAA-1091).